Reading from the N-terminus, the 215-residue chain is Cytochrome b6 (215 aa).

The helical transmembrane segment at 32–52 threads the bilayer; it reads IFYCLGGITLTCFLVQVATGF. Cys35 contacts heme c. The heme b site is built by His86 and His100. A run of 3 helical transmembrane segments spans residues 90-110, 116-136, and 186-206; these read ASMMVLMMILHVFRVYLTGGF, LTWVTGVVLAVLTASFGVTGY, and LHTFVLPLLTAVFMLMHFPMI. Heme b is bound by residues His187 and His202.

This sequence belongs to the cytochrome b family. PetB subfamily. As to quaternary structure, the 4 large subunits of the cytochrome b6-f complex are cytochrome b6, subunit IV (17 kDa polypeptide, PetD), cytochrome f and the Rieske protein, while the 4 small subunits are PetG, PetL, PetM and PetN. The complex functions as a dimer. Requires heme b as cofactor. Heme c is required as a cofactor.

It is found in the plastid. The protein resides in the chloroplast thylakoid membrane. Its function is as follows. Component of the cytochrome b6-f complex, which mediates electron transfer between photosystem II (PSII) and photosystem I (PSI), cyclic electron flow around PSI, and state transitions. This is Cytochrome b6 from Saccharum hybrid (Sugarcane).